Here is a 216-residue protein sequence, read N- to C-terminus: Cytidylate kinase (216 aa).

Residue Gly-9–Thr-17 coordinates ATP.

This sequence belongs to the cytidylate kinase family. Type 1 subfamily.

It localises to the cytoplasm. It carries out the reaction CMP + ATP = CDP + ADP. The catalysed reaction is dCMP + ATP = dCDP + ADP. The sequence is that of Cytidylate kinase from Caulobacter sp. (strain K31).